The chain runs to 189 residues: UPF0688 protein C1orf174 homolog (189 aa).

The segment at 53–137 is disordered; sequence QMAGDGGEAK…TTDPSVFFDE (85 aa). Composition is skewed to basic and acidic residues over residues 59 to 73 and 93 to 103; these read GEAK…HGEV and APGERRGKENS.

It belongs to the UPF0688 family.

It localises to the nucleus. The chain is UPF0688 protein C1orf174 homolog from Danio rerio (Zebrafish).